Reading from the N-terminus, the 237-residue chain is Leucyl/phenylalanyl-tRNA--protein transferase (237 aa).

Belongs to the L/F-transferase family.

Its subcellular location is the cytoplasm. It carries out the reaction N-terminal L-lysyl-[protein] + L-leucyl-tRNA(Leu) = N-terminal L-leucyl-L-lysyl-[protein] + tRNA(Leu) + H(+). The catalysed reaction is N-terminal L-arginyl-[protein] + L-leucyl-tRNA(Leu) = N-terminal L-leucyl-L-arginyl-[protein] + tRNA(Leu) + H(+). It catalyses the reaction L-phenylalanyl-tRNA(Phe) + an N-terminal L-alpha-aminoacyl-[protein] = an N-terminal L-phenylalanyl-L-alpha-aminoacyl-[protein] + tRNA(Phe). Functions in the N-end rule pathway of protein degradation where it conjugates Leu, Phe and, less efficiently, Met from aminoacyl-tRNAs to the N-termini of proteins containing an N-terminal arginine or lysine. The chain is Leucyl/phenylalanyl-tRNA--protein transferase from Shewanella baltica (strain OS223).